A 240-amino-acid chain; its full sequence is Glutamine amidotransferase-like protein chry6 (240 aa).

A Glutamine amidotransferase type-1 domain is found at 13–205 (NFILDDTGGR…FVASDNPVLV (193 aa)). C102 serves as the catalytic Nucleophile. Catalysis depends on residues H185 and E187.

The protein belongs to the peptidase C26 family.

It functions in the pathway pigment biosynthesis. Its function is as follows. Glutamine amidotransferase-like protein; part of the gene cluster that mediates the biosynthesis of the yellow pigment chrysogine. Pyruvic acid and anthranilic acid are likely substrates for the nonribosomal peptide synthetase chry1/NRPS14, with pyruvic acid adenylated by the first A domain and anthranilic acid by the second. If pyruvic acid and anthranilic acid are merged and released from chry1/NRPS14 by hydrolysis, a subsequent amidation would lead to 2-pyruvoylaminobenzamide. This process is probably catalyzed by the amidotransferase chry2 using glutamine as amino donor. The dehydrogenase chry5 that has a terminal berberine bridge domain for C-N cyclization could catalyze the cyclization of 2-pyruvoylaminobenzamide to yield acetyl-4(3H)-quinazolidinone. A final reduction of acetyl-4(3H)-quinazolidinone catalyzed by the oxidoreductase chry4 would result in chrysogine. This Gibberella zeae (strain ATCC MYA-4620 / CBS 123657 / FGSC 9075 / NRRL 31084 / PH-1) (Wheat head blight fungus) protein is Glutamine amidotransferase-like protein chry6.